The following is a 347-amino-acid chain: Endo-1,4-beta-xylanase 3 (347 aa).

A signal peptide spans 1-16 (MKANVILCLLAPLVAA). A propeptide spanning residues 17 to 45 (LPTETIHLDPELAALRANLTERTADLWDR) is cleaved from the precursor. The residue at position 46 (Gln46) is a Pyrrolidone carboxylic acid. One can recognise a GH10 domain in the interval 46–345 (QASQSIDQLI…KPAYNSIVGI (300 aa)). The active-site Proton donor is the Glu176. Residue Glu282 is the Nucleophile of the active site. A disulfide bridge links Cys300 with Cys306.

This sequence belongs to the glycosyl hydrolase 10 (cellulase F) family. Monomer. Not glycosylated.

It is found in the secreted. It carries out the reaction Endohydrolysis of (1-&gt;4)-beta-D-xylosidic linkages in xylans.. It participates in glycan degradation; xylan degradation. Its function is as follows. Glycoside hydrolase involved in the hydrolysis of xylan, a major plant cell wall hemicellulose made up of 1,4-beta-linked D-xylopyranose residues. Catalyzes the endohydrolysis of the main-chain 1,4-beta-glycosidic bonds connecting the xylose subunits yielding various xylooligosaccharides and xylose. Produces xylobiose and xylotriose as the main degradation products. The chain is Endo-1,4-beta-xylanase 3 (xyn3) from Hypocrea jecorina (strain QM6a) (Trichoderma reesei).